The chain runs to 580 residues: Zinc finger protein 271 (580 aa).

18 consecutive C2H2-type zinc fingers follow at residues 78–100 (YNCDECDQSFAWSTGLIRHQRTH), 104–126 (YECEECGKAFRMSSALVLHQRIH), 132–154 (YPCSWCIKSFSRSSDLIKHQRVH), 160–182 (YKCDECGKAFSQSSDLMIHQRIH), 188–210 (YQCSHCSKSFSQHSGMVKHLRIH), 216–238 (YMCNHCYKHFSQSSDLIKHQRIH), 244–266 (YKCDVCGKAFSQSSDRILHQRIH), 272–294 (YPCAQCNKSFSQNSDLIKHRRIH), 300–322 (YKCSECGKAFNQSSVLILHQRIH), 328–350 (YPCNQCTKSFSRLSDLINHQRIH), 356–378 (YPCSQCSKMFSRRSDLVKHYRIH), 384–406 (YECDKCGKTFSQSSNLILHQRIH), 412–434 (YPCNSCSKSFSRGSDLIKHQRVH), 440–462 (YTCNLCSKSFSQSSDLTKHQRVH), 468–490 (YHCSSCNKAFRQSSDLILHHRVH), 496–518 (YACTQCPRSFSQKSDLIKHQRIH), 524–545 (YKCMCGKAFSQCSAFTLHQRIH), and 551–573 (YPCAQCGKSFSQRSDLVNHQRVH).

This sequence belongs to the krueppel C2H2-type zinc-finger protein family. As to expression, selectively expressed in adult testis.

It localises to the nucleus. In terms of biological role, may act to control gene activity during the pachytene stage of meiotic prophase. May function as a transcription activator. The protein is Zinc finger protein 271 (Znf271) of Mus musculus (Mouse).